Consider the following 256-residue polypeptide: Tyrosine-protein kinase-interacting protein (256 aa).

Acidic residues predominate over residues 1–14; that stretch reads MANEGEEIELTEFP. The disordered stretch occupies residues 1-49; that stretch reads MANEGEEIELTEFPETEKERKDEEKLSSCSEETTNTSSSSGSDHVPVPI. The Cytoplasmic segment spans residues 1–228; it reads MANEGEEIEL…DLKRLENKIN (228 aa). A compositionally biased stretch (basic and acidic residues) spans 15 to 26; that stretch reads ETEKERKDEEKL. The segment covering 27-42 has biased composition (low complexity); that stretch reads SSCSEETTNTSSSSGS. Tyr-114 is modified (phosphotyrosine; by host LCK). Tyr-127 bears the Phosphotyrosine; by host mark. Residues 146-155 form a CSKH/LBD2 region; that stretch reads EDLQSFLEKY. The interval 162–183 is disordered; it reads PKRDLSATWDPGMPTPPLPPRP. Residues 174-183 are SH3B/LBD1; it reads MPTPPLPPRP. Pro residues predominate over residues 174-183; it reads MPTPPLPPRP. A helical transmembrane segment spans residues 229–249; sequence VIICLVVVILAVLLLVTVLSI. Residues 250 to 256 lie on the Extracellular side of the membrane; that stretch reads LHIGMKS.

In terms of assembly, binds host LCK, human WDR48 and human NXF1/TAP. Forms a complex with activated LCK and STAT1 and STAT3. Phosphorylation on Tyr-114 acts as a docking site for the recruitment of STATs 1 and 3.

Its subcellular location is the host cell membrane. Plays a critical role in virus induced T-cell transformation. Binds to T-cell-specific tyrosine kinase LCK SH2 and SH3 domains, thereby activating its kinase activity. Once phosphorylated by host LCK, forms a complex with at least STAT 1 and 3, resulting on the phosphorylation of STAT3 and presumably STAT1, and their migration into the nucleus to induce transcription of target genes. Stimulates host ILF3/NF-AT-90 activity. Association with host NXF1/TAP transduces the signal up-regulating surface expression of adhesion molecules as well as activating NF-kappa-B activity. Acts synergistically with StpC to stimulate NF-kappa-B activity and interleukin-2 gene expression. Activation of NF-kappa-B protects lymphocytes from apoptosis, thereby facilitating viral induced cell transformation. May cause down-regulation of host LCK and cell apoptosis when stably overexpressed ex vivo. Interaction with WDR48 induce degradation of T-cell receptor in a lysosome-dependent fashion, when both proteins are overexpressed. The biological effect of this interaction remains controversial since no T-cell receptor degradation is observed in infected cells. The sequence is that of Tyrosine-protein kinase-interacting protein from Saimiri sciureus (Common squirrel monkey).